The chain runs to 522 residues: Bifunctional purine biosynthesis protein PurH (522 aa).

The region spanning 1-145 (MKPIARALIS…KNHAAVTVIV (145 aa)) is the MGS-like domain.

Belongs to the PurH family.

The catalysed reaction is (6R)-10-formyltetrahydrofolate + 5-amino-1-(5-phospho-beta-D-ribosyl)imidazole-4-carboxamide = 5-formamido-1-(5-phospho-D-ribosyl)imidazole-4-carboxamide + (6S)-5,6,7,8-tetrahydrofolate. It carries out the reaction IMP + H2O = 5-formamido-1-(5-phospho-D-ribosyl)imidazole-4-carboxamide. It participates in purine metabolism; IMP biosynthesis via de novo pathway; 5-formamido-1-(5-phospho-D-ribosyl)imidazole-4-carboxamide from 5-amino-1-(5-phospho-D-ribosyl)imidazole-4-carboxamide (10-formyl THF route): step 1/1. Its pathway is purine metabolism; IMP biosynthesis via de novo pathway; IMP from 5-formamido-1-(5-phospho-D-ribosyl)imidazole-4-carboxamide: step 1/1. The sequence is that of Bifunctional purine biosynthesis protein PurH from Nitrosococcus oceani (strain ATCC 19707 / BCRC 17464 / JCM 30415 / NCIMB 11848 / C-107).